Consider the following 90-residue polypeptide: Large ribosomal subunit protein bL27 (90 aa).

Residues 1–20 (MAHKKAGGSSRNGRDSAGKR) are disordered.

This sequence belongs to the bacterial ribosomal protein bL27 family.

This is Large ribosomal subunit protein bL27 from Nitrobacter hamburgensis (strain DSM 10229 / NCIMB 13809 / X14).